The sequence spans 360 residues: Phospho-N-acetylmuramoyl-pentapeptide-transferase (360 aa).

Transmembrane regions (helical) follow at residues 24-44 (RAVMAALTALAFSLMFGPWTI), 69-89 (GTPTMGGSLILTAITVSTLLW), 92-112 (WANPYIWILLGVLLATGALGF), 133-153 (MVWQSSVAIIAGLALFYLAAN), 158-178 (ILIVPFFKQIALPLGVVGFLV), 199-219 (GLATFPVVLVAAGLAIFAYAS), 239-259 (VVIFCTAMCGACLGFLWFNAY), 263-283 (VFMGDVGALALGAALGTVAVI), 288-308 (FVLVIMGGLFVVEAVSVMLQV), and 337-357 (QVVVRFWIITIVLVLIGLSTL).

Belongs to the glycosyltransferase 4 family. MraY subfamily. Mg(2+) is required as a cofactor.

The protein resides in the cell inner membrane. The catalysed reaction is UDP-N-acetyl-alpha-D-muramoyl-L-alanyl-gamma-D-glutamyl-meso-2,6-diaminopimeloyl-D-alanyl-D-alanine + di-trans,octa-cis-undecaprenyl phosphate = di-trans,octa-cis-undecaprenyl diphospho-N-acetyl-alpha-D-muramoyl-L-alanyl-D-glutamyl-meso-2,6-diaminopimeloyl-D-alanyl-D-alanine + UMP. It participates in cell wall biogenesis; peptidoglycan biosynthesis. Catalyzes the initial step of the lipid cycle reactions in the biosynthesis of the cell wall peptidoglycan: transfers peptidoglycan precursor phospho-MurNAc-pentapeptide from UDP-MurNAc-pentapeptide onto the lipid carrier undecaprenyl phosphate, yielding undecaprenyl-pyrophosphoryl-MurNAc-pentapeptide, known as lipid I. The sequence is that of Phospho-N-acetylmuramoyl-pentapeptide-transferase from Neisseria meningitidis serogroup A / serotype 4A (strain DSM 15465 / Z2491).